The chain runs to 229 residues: Heptaprenylglyceryl phosphate synthase (229 aa).

Position 12 (K12) interacts with sn-glycerol 1-phosphate. Mg(2+)-binding residues include D14 and S40. Sn-glycerol 1-phosphate-binding positions include 159 to 164 (YLEYSG), G189, and 209 to 210 (GN).

This sequence belongs to the GGGP/HepGP synthase family. Group I subfamily. In terms of assembly, homodimer. Mg(2+) serves as cofactor.

It carries out the reaction sn-glycerol 1-phosphate + all-trans-heptaprenyl diphosphate = 3-heptaprenyl-sn-glycero-1-phosphate + diphosphate. The protein operates within membrane lipid metabolism; glycerophospholipid metabolism. Its function is as follows. Prenyltransferase that catalyzes in vivo the transfer of the heptaprenyl moiety of heptaprenyl pyrophosphate (HepPP; 35 carbon atoms) to the C3 hydroxyl of sn-glycerol-1-phosphate (G1P), producing heptaprenylglyceryl phosphate (HepGP). This reaction is an ether-bond-formation step in the biosynthesis of archaea-type G1P-based membrane lipids found in Bacillales. The protein is Heptaprenylglyceryl phosphate synthase of Bacillus cereus (strain B4264).